The primary structure comprises 597 residues: Period protein homolog lin-42 (597 aa).

Residues 1–44 (MEPAGHSSATHNIVVPNANPTQPQPLAPAMREEGATLSPPNTWS) are disordered. The region spanning 155 to 223 (LQASHVSSNF…VRQAHIDLHN (69 aa)) is the PAS domain. Disordered stretches follow at residues 313-335 (PVPS…QNQG), 418-450 (KSQS…EALT), 473-509 (DDVP…PPPG), and 555-597 (DGLL…DSQN). Positions 425–438 (SPAKQDEPFDEKKY) are enriched in basic and acidic residues. The segment covering 487 to 497 (IHWTSSSQNHY) has biased composition (polar residues). Residues 561-577 (GATSTGGASPTSGTNSP) are compositionally biased toward low complexity.

It localises to the nucleus. The protein resides in the cytoplasm. Transcriptional repressor which interacts with the promoter region of target genes. Has a specific role in developmental timing where it regulates temporal expression of a number of miRNAs and mRNAs. Controls temporal cell fate transition during embryonic and early larval development by restricting the expression of specific miRNAs, including let-7, miR-48, lin-4, miR-35 and miR-58. Restricts the accumulation of lin-29 in the hypodermis to the larval L4 stage, thus controlling terminal differentiation of seam cells. Has a role in the miRNA-mediated specification of asymmetric gene expression patterns in gustatory neurons. May also regulate genes involved in other biological processes including transport, small molecule metabolism, and growth. Inhibits dauer formation, by antagonizing daf-12. Functionally, specifically required for maintaining the timing of larval development and molting cycle rhythms. The sequence is that of Period protein homolog lin-42 from Caenorhabditis elegans.